The following is a 273-amino-acid chain: Cilia- and flagella-associated protein 298-B (273 aa).

Belongs to the CFAP298 family.

The protein resides in the cytoplasm. It is found in the cytoskeleton. It localises to the cilium basal body. Plays a role in motile cilium function, possibly by acting on outer dynein arm assembly. Seems to be important for initiation rather than maintenance of cilium motility. Required for correct positioning of the cilium at the apical cell surface, suggesting an additional role in the planar cell polarity (PCP) pathway. May suppress canonical Wnt signaling activity. The chain is Cilia- and flagella-associated protein 298-B (cfap298-b) from Xenopus laevis (African clawed frog).